We begin with the raw amino-acid sequence, 89 residues long: Small ribosomal subunit protein uS15 (89 aa).

It belongs to the universal ribosomal protein uS15 family. In terms of assembly, part of the 30S ribosomal subunit. Forms a bridge to the 50S subunit in the 70S ribosome, contacting the 23S rRNA.

In terms of biological role, one of the primary rRNA binding proteins, it binds directly to 16S rRNA where it helps nucleate assembly of the platform of the 30S subunit by binding and bridging several RNA helices of the 16S rRNA. Its function is as follows. Forms an intersubunit bridge (bridge B4) with the 23S rRNA of the 50S subunit in the ribosome. The polypeptide is Small ribosomal subunit protein uS15 (Lactococcus lactis subsp. lactis (strain IL1403) (Streptococcus lactis)).